The chain runs to 151 residues: 3-dehydroquinate dehydratase (151 aa).

Tyrosine 26 functions as the Proton acceptor in the catalytic mechanism. 3 residues coordinate substrate: asparagine 75, histidine 81, and aspartate 88. The Proton donor role is filled by histidine 101. Residues 102-103 and arginine 112 contribute to the substrate site; that span reads LS.

Belongs to the type-II 3-dehydroquinase family. Homododecamer.

The enzyme catalyses 3-dehydroquinate = 3-dehydroshikimate + H2O. The protein operates within metabolic intermediate biosynthesis; chorismate biosynthesis; chorismate from D-erythrose 4-phosphate and phosphoenolpyruvate: step 3/7. Functionally, catalyzes a trans-dehydration via an enolate intermediate. The protein is 3-dehydroquinate dehydratase of Shewanella sediminis (strain HAW-EB3).